A 677-amino-acid chain; its full sequence is Pentatricopeptide repeat-containing protein At5g39350 (677 aa).

PPR repeat units follow at residues 48 to 78 (SGHI…MPQS), 79 to 113 (SLLS…GVKC), 116 to 146 (DGYT…ILRS), 151 to 181 (DKYV…MKNR), 182 to 216 (DVIS…SVDL), 217 to 251 (DHAT…RLGD), 252 to 282 (KIEV…MERR), 283 to 317 (DVIT…GVRP), 318 to 352 (NAVT…QVYS), 353 to 383 (DIII…ASKY), 384 to 418 (HTGP…DVEP), 419 to 453 (NIAT…GFMS), 454 to 488 (SLDA…HKSK), 489 to 523 (DVVL…GVTP), 524 to 554 (NEIT…MLEH), and 560 to 590 (RSNH…IPFE). The type E motif stretch occupies residues 595–670 (VWGALLAACV…KPGHSTIEIR (76 aa)).

This sequence belongs to the PPR family. PCMP-E subfamily.

The protein is Pentatricopeptide repeat-containing protein At5g39350 (PCMP-E16) of Arabidopsis thaliana (Mouse-ear cress).